A 149-amino-acid chain; its full sequence is Probable glycine cleavage system H protein 2 (149 aa).

The 83-residue stretch at 32 to 114 (IAVVGITDLA…YGQGWIAKIK (83 aa)) folds into the Lipoyl-binding domain. K73 is subject to N6-lipoyllysine.

Belongs to the GcvH family. As to quaternary structure, the glycine cleavage system is composed of four proteins: P, T, L and H. (R)-lipoate serves as cofactor.

In terms of biological role, the glycine cleavage system catalyzes the degradation of glycine. The H protein shuttles the methylamine group of glycine from the P protein to the T protein. This chain is Probable glycine cleavage system H protein 2, found in Sulfolobus acidocaldarius (strain ATCC 33909 / DSM 639 / JCM 8929 / NBRC 15157 / NCIMB 11770).